Here is a 339-residue protein sequence, read N- to C-terminus: Glyceraldehyde-3-phosphate dehydrogenase (339 aa).

NAD(+) is bound by residues 13-14 (RI), D35, and K84. D-glyceraldehyde 3-phosphate-binding positions include 156-158 (SCT), T187, 216-217 (TG), and R239. The active-site Nucleophile is C157. Residue N321 coordinates NAD(+).

It belongs to the glyceraldehyde-3-phosphate dehydrogenase family. In terms of assembly, homotetramer.

The protein resides in the cytoplasm. The enzyme catalyses D-glyceraldehyde 3-phosphate + phosphate + NAD(+) = (2R)-3-phospho-glyceroyl phosphate + NADH + H(+). The protein operates within carbohydrate degradation; glycolysis; pyruvate from D-glyceraldehyde 3-phosphate: step 1/5. The chain is Glyceraldehyde-3-phosphate dehydrogenase from Onchocerca volvulus.